Reading from the N-terminus, the 190-residue chain is Dynein axonemal light chain 1 (190 aa).

Ala-2 carries the post-translational modification N-acetylalanine. LRR repeat units lie at residues Asn-49–Lys-70, Asn-71–Gly-92, Thr-94–Lys-115, and Lys-116–Ala-137. Residue Ser-56 is modified to Phosphoserine. One can recognise an LRRCT domain in the interval Asn-150 to Asn-190.

It belongs to the dynein light chain LC1-type family. As to quaternary structure, interacts with ZMYND10 (via C-terminus). Interacts with DNAH5, a outer arm dynein heavy chain. Interacts with tubulin located within the A-tubule of the outer doublets in a ATP-independent manner.

Its subcellular location is the cytoplasm. The protein localises to the cytoskeleton. It localises to the cilium axoneme. Its function is as follows. Part of the multisubunit axonemal ATPase complexes that generate the force for cilia motility and govern beat frequency. Component of the outer arm dynein (ODA). May be involved in a mechanosensory feedback mechanism controlling ODA activity based on external conformational cues by tethering the outer arm dynein heavy chain (DNAH5) to the microtubule within the axoneme. Important for ciliary function in the airways and for the function of the cilia that produce the nodal flow essential for the determination of the left-right asymmetry. The polypeptide is Dynein axonemal light chain 1 (DNAL1) (Bos taurus (Bovine)).